We begin with the raw amino-acid sequence, 185 residues long: Peptidyl-tRNA hydrolase (185 aa).

Tyrosine 14 lines the tRNA pocket. Histidine 19 serves as the catalytic Proton acceptor. The tRNA site is built by phenylalanine 64, asparagine 66, and asparagine 112.

The protein belongs to the PTH family. As to quaternary structure, monomer.

The protein localises to the cytoplasm. It catalyses the reaction an N-acyl-L-alpha-aminoacyl-tRNA + H2O = an N-acyl-L-amino acid + a tRNA + H(+). Hydrolyzes ribosome-free peptidyl-tRNAs (with 1 or more amino acids incorporated), which drop off the ribosome during protein synthesis, or as a result of ribosome stalling. Functionally, catalyzes the release of premature peptidyl moieties from peptidyl-tRNA molecules trapped in stalled 50S ribosomal subunits, and thus maintains levels of free tRNAs and 50S ribosomes. This is Peptidyl-tRNA hydrolase from Alkaliphilus oremlandii (strain OhILAs) (Clostridium oremlandii (strain OhILAs)).